We begin with the raw amino-acid sequence, 201 residues long: Ras-related protein Rab-9B (201 aa).

Residues Val-18, Gly-19, Lys-20, Ser-21, Ser-22, Asp-33, Ser-34, Ala-36, His-38, and Thr-39 each coordinate GTP. Ser-21 is a Mg(2+) binding site. A Switch 1 motif is present at residues 31 to 42; that stretch reads KFDSQAFHTIGV. At Ser-34 the chain carries Phosphoserine. Residues Thr-39 and Asp-62 each contribute to the Mg(2+) site. The Switch 2 signature appears at 64-78; that stretch reads AGQERFKSLRTPFYR. Gly-65, Asn-124, Lys-125, Ala-155, and Lys-156 together coordinate GTP. 2 S-geranylgeranyl cysteine lipidation sites follow: Cys-200 and Cys-201.

Belongs to the small GTPase superfamily. Rab family. As to quaternary structure, interacts (GTP-bound form) with SGSM1; the GDP-bound form has much lower affinity for SGSM1. The GTP-bound form but not the GDP-bound form interacts with HPS4 and the BLOC-3 complex (heterodimer of HPS1 and HPS4) but does not interact with HPS1 alone. Interacts (GTP-bound form) with NDE1. It depends on Mg(2+) as a cofactor.

The protein localises to the cell membrane. Its subcellular location is the cytoplasmic vesicle. It is found in the phagosome membrane. The catalysed reaction is GTP + H2O = GDP + phosphate + H(+). Its activity is regulated as follows. Regulated by guanine nucleotide exchange factors (GEFs) which promote the exchange of bound GDP for free GTP. Regulated by GTPase activating proteins (GAPs) which increase the GTP hydrolysis activity. Inhibited by GDP dissociation inhibitors (GDIs). Its function is as follows. The small GTPases Rab are key regulators of intracellular membrane trafficking, from the formation of transport vesicles to their fusion with membranes. Rabs cycle between an inactive GDP-bound form and an active GTP-bound form that is able to recruit to membranes different sets of downstream effectors directly responsible for vesicle formation, movement, tethering and fusion. RAB9B is involved in the transport of proteins between the endosomes and the trans Golgi network. May use NDE1/NDEL1 as an effector to interact with the dynein motor complex in order to control retrograde trafficking of RAB9-associated late endosomes to the TGN. This chain is Ras-related protein Rab-9B (RAB9B), found in Pongo abelii (Sumatran orangutan).